Here is a 307-residue protein sequence, read N- to C-terminus: 2-phospho-L-lactate transferase (307 aa).

Positions 48 and 87 each coordinate 7,8-didemethyl-8-hydroxy-5-deazariboflavin.

It belongs to the CofD family. Homodimer. It depends on Mg(2+) as a cofactor.

The catalysed reaction is (2S)-lactyl-2-diphospho-5'-guanosine + 7,8-didemethyl-8-hydroxy-5-deazariboflavin = oxidized coenzyme F420-0 + GMP + H(+). The protein operates within cofactor biosynthesis; coenzyme F420 biosynthesis. Catalyzes the transfer of the 2-phospholactate moiety from (2S)-lactyl-2-diphospho-5'-guanosine to 7,8-didemethyl-8-hydroxy-5-deazariboflavin (FO) with the formation of oxidized coenzyme F420-0 and GMP. In Methanosarcina acetivorans (strain ATCC 35395 / DSM 2834 / JCM 12185 / C2A), this protein is 2-phospho-L-lactate transferase.